The chain runs to 807 residues: Probable dimethyl sulfoxide reductase chain YnfF (807 aa).

The segment at residues methionine 1 to alanine 45 is a signal peptide (tat-type signal). The 62-residue stretch at glutamate 52 to aspartate 113 folds into the 4Fe-4S Mo/W bis-MGD-type domain. Positions 59, 63, 67, and 99 each coordinate [4Fe-4S] cluster. Serine 195 provides a ligand contact to Mo-bis(molybdopterin guanine dinucleotide).

Belongs to the prokaryotic molybdopterin-containing oxidoreductase family. In terms of assembly, the complex consists of three subunits: YnfF, the reductase; YnfG, an electron transfer protein, and YnfH, a membrane anchor protein. Requires [4Fe-4S] cluster as cofactor. Mo-bis(molybdopterin guanine dinucleotide) is required as a cofactor. Exported by the Tat system. The position of the signal peptide cleavage has not been experimentally proven. Can also be exported by the Sec system.

It localises to the cell membrane. Functionally, terminal reductase during anaerobic growth on various sulfoxide and N-oxide compounds. The polypeptide is Probable dimethyl sulfoxide reductase chain YnfF (ynfF) (Escherichia coli (strain K12)).